We begin with the raw amino-acid sequence, 159 residues long: 2-C-methyl-D-erythritol 2,4-cyclodiphosphate synthase (159 aa).

A divalent metal cation is bound by residues Asp-8 and His-10. 4-CDP-2-C-methyl-D-erythritol 2-phosphate contacts are provided by residues 8–10 and 34–35; these read DVH and HS. Residue His-42 coordinates a divalent metal cation. 4-CDP-2-C-methyl-D-erythritol 2-phosphate is bound by residues 56–58, 61–65, 100–106, 132–135, Phe-139, and Arg-142; these read DIG, FPDTD, AQAPKML, and TTTE.

The protein belongs to the IspF family. Homotrimer. A divalent metal cation serves as cofactor.

The catalysed reaction is 4-CDP-2-C-methyl-D-erythritol 2-phosphate = 2-C-methyl-D-erythritol 2,4-cyclic diphosphate + CMP. It functions in the pathway isoprenoid biosynthesis; isopentenyl diphosphate biosynthesis via DXP pathway; isopentenyl diphosphate from 1-deoxy-D-xylulose 5-phosphate: step 4/6. Functionally, involved in the biosynthesis of isopentenyl diphosphate (IPP) and dimethylallyl diphosphate (DMAPP), two major building blocks of isoprenoid compounds. Catalyzes the conversion of 4-diphosphocytidyl-2-C-methyl-D-erythritol 2-phosphate (CDP-ME2P) to 2-C-methyl-D-erythritol 2,4-cyclodiphosphate (ME-CPP) with a corresponding release of cytidine 5-monophosphate (CMP). The polypeptide is 2-C-methyl-D-erythritol 2,4-cyclodiphosphate synthase (Escherichia coli O139:H28 (strain E24377A / ETEC)).